Reading from the N-terminus, the 1173-residue chain is WASH complex subunit 4 (1173 aa).

Alanine 2 carries the N-acetylalanine modification. Position 7 is a phosphoserine (serine 7). A coiled-coil region spans residues 27–56; that stretch reads QLKNYGRFLEEYTSQLRRIEDALDDLIGDV. The segment at 705 to 1173 is sufficient for interaction with WASHC5; that stretch reads KDLALFFSLN…STVSADPVVK (469 aa). Residues 1141 to 1155 show a composition bias toward basic and acidic residues; it reads AEENQEKKEKEEETK. The tract at residues 1141-1173 is disordered; it reads AEENQEKKEKEEETKTSNGDGPESTVSADPVVK. The residue at position 1154 (threonine 1154) is a Phosphothreonine.

The protein belongs to the SWIP family. In terms of assembly, component of the WASH core complex also described as WASH regulatory complex (SHRC) composed of WASH (WASHC1, WASH2P or WASH3P), WASHC2 (WASHC2A or WASHC2C), WASHC3, WASHC4 and WASHC5. The WASH core complex associates via WASHC2 with the F-actin-capping protein dimer (formed by CAPZA1, CAPZA2 or CAPZA3 and CAPZB) in a transient or substoichiometric manner which was initially described as WASH complex.

It is found in the early endosome. Acts as a component of the WASH core complex that functions as a nucleation-promoting factor (NPF) at the surface of endosomes, where it recruits and activates the Arp2/3 complex to induce actin polymerization, playing a key role in the fission of tubules that serve as transport intermediates during endosome sorting. The chain is WASH complex subunit 4 from Mus musculus (Mouse).